The sequence spans 417 residues: Indole-3-pyruvate monooxygenase YUCCA6 (417 aa).

FAD is bound at residue 36 to 41; sequence GAGPSG. 204–209 provides a ligand contact to NADP(+); that stretch reads GCGNSG.

This sequence belongs to the FMO family. FAD is required as a cofactor. As to expression, highly expressed in roots but modestly expressed in the cauline leaves and flowers. Expressed in anthers.

The protein localises to the cytoplasm. The catalysed reaction is indole-3-pyruvate + NADPH + O2 + H(+) = (indol-3-yl)acetate + CO2 + NADP(+) + H2O. Its pathway is plant hormone metabolism; auxin biosynthesis. Its function is as follows. Involved in auxin biosynthesis via the indole-3-pyruvic acid (IPA) pathway. Also able to convert in vitro phenyl pyruvate (PPA) to phenyl acetic acid (PAA). Required for the formation of floral organs and vascular tissues. Belongs to the set of redundant YUCCA genes probably responsible for auxin biosynthesis in shoots. The polypeptide is Indole-3-pyruvate monooxygenase YUCCA6 (YUC6) (Arabidopsis thaliana (Mouse-ear cress)).